A 136-amino-acid polypeptide reads, in one-letter code: Glutamyl-tRNA(Gln) amidotransferase subunit C, mitochondrial (136 aa).

It belongs to the GatC family. As to quaternary structure, subunit of the heterotrimeric GatCAB amidotransferase (AdT) complex, composed of A (QRSL1), B (GATB) and C (GATC) subunits.

The protein localises to the mitochondrion. It catalyses the reaction L-glutamyl-tRNA(Gln) + L-glutamine + ATP + H2O = L-glutaminyl-tRNA(Gln) + L-glutamate + ADP + phosphate + H(+). Functionally, allows the formation of correctly charged Gln-tRNA(Gln) through the transamidation of misacylated Glu-tRNA(Gln) in the mitochondria. The reaction takes place in the presence of glutamine and ATP through an activated gamma-phospho-Glu-tRNA(Gln). In Homo sapiens (Human), this protein is Glutamyl-tRNA(Gln) amidotransferase subunit C, mitochondrial.